Reading from the N-terminus, the 204-residue chain is Somatotropin (204 aa).

The N-terminal stretch at 1–17 (MERAVLLLSLLSLGVSS) is a signal peptide. A Pyrrolidone carboxylic acid modification is found at Q18. H36 is a Zn(2+) binding site. The cysteines at positions 69 and 177 are disulfide-linked. Zn(2+) is bound at residue E186. An intrachain disulfide couples C194 to C202.

The protein belongs to the somatotropin/prolactin family.

The protein localises to the secreted. In terms of biological role, growth hormone plays an important role in growth control and involved in the regulation of several anabolic processes. In Perca flavescens (American yellow perch), this protein is Somatotropin (gh).